The primary structure comprises 213 residues: Orotate phosphoribosyltransferase (213 aa).

Lysine 26 contributes to the 5-phospho-alpha-D-ribose 1-diphosphate binding site. 34-35 (FF) is an orotate binding site. 5-phospho-alpha-D-ribose 1-diphosphate contacts are provided by residues 72–73 (YK), arginine 99, lysine 100, lysine 103, histidine 105, and 124–132 (DDVITAGTA). Residues threonine 128 and arginine 156 each contribute to the orotate site.

Belongs to the purine/pyrimidine phosphoribosyltransferase family. PyrE subfamily. Homodimer. The cofactor is Mg(2+).

It catalyses the reaction orotidine 5'-phosphate + diphosphate = orotate + 5-phospho-alpha-D-ribose 1-diphosphate. It participates in pyrimidine metabolism; UMP biosynthesis via de novo pathway; UMP from orotate: step 1/2. Its function is as follows. Catalyzes the transfer of a ribosyl phosphate group from 5-phosphoribose 1-diphosphate to orotate, leading to the formation of orotidine monophosphate (OMP). This Alteromonas mediterranea (strain DSM 17117 / CIP 110805 / LMG 28347 / Deep ecotype) protein is Orotate phosphoribosyltransferase.